The chain runs to 340 residues: Ketol-acid reductoisomerase (NADP(+)) (340 aa).

In terms of domain architecture, KARI N-terminal Rossmann spans 1 to 183 (MAITVYYDKD…GGGRTGIIET (183 aa)). NADP(+)-binding positions include 26–29 (FGSQ), Ser-54, and 84–87 (DEFQ). Residue His-109 is part of the active site. Gly-135 is a binding site for NADP(+). Residues 184–329 (TFKAETETDL…EKLRGMMPWI (146 aa)) enclose the KARI C-terminal knotted domain. Residues Asp-192, Glu-196, Glu-228, and Glu-232 each coordinate Mg(2+). Position 253 (Ser-253) interacts with substrate.

It belongs to the ketol-acid reductoisomerase family. The cofactor is Mg(2+).

It carries out the reaction (2R)-2,3-dihydroxy-3-methylbutanoate + NADP(+) = (2S)-2-acetolactate + NADPH + H(+). The catalysed reaction is (2R,3R)-2,3-dihydroxy-3-methylpentanoate + NADP(+) = (S)-2-ethyl-2-hydroxy-3-oxobutanoate + NADPH + H(+). Its pathway is amino-acid biosynthesis; L-isoleucine biosynthesis; L-isoleucine from 2-oxobutanoate: step 2/4. The protein operates within amino-acid biosynthesis; L-valine biosynthesis; L-valine from pyruvate: step 2/4. Functionally, involved in the biosynthesis of branched-chain amino acids (BCAA). Catalyzes an alkyl-migration followed by a ketol-acid reduction of (S)-2-acetolactate (S2AL) to yield (R)-2,3-dihydroxy-isovalerate. In the isomerase reaction, S2AL is rearranged via a Mg-dependent methyl migration to produce 3-hydroxy-3-methyl-2-ketobutyrate (HMKB). In the reductase reaction, this 2-ketoacid undergoes a metal-dependent reduction by NADPH to yield (R)-2,3-dihydroxy-isovalerate. This is Ketol-acid reductoisomerase (NADP(+)) from Campylobacter fetus subsp. fetus (strain 82-40).